Reading from the N-terminus, the 345-residue chain is Transcription factor 19 (345 aa).

Positions 31 to 88 constitute an FHA domain; that stretch reads YRLGHRADLCDVALRPQQEPGLISGIHAELHAEPRGDDWRVSLEDHSSQGTLVNNVRL. Phosphoserine is present on Ser-78. Disordered stretches follow at residues 147–167 and 190–227; these read AGFRPMLPSQGAPQRPLSTLS and LTFSPSWGGPKSLPVPAPPGEVGTTPSAPPQRNRRKSV. The PHD-type zinc-finger motif lies at 293–342; it reads AAPCCCLPQEETVAWVQCDGCDVWFHVACVGCSIQAAREADFRCPGCRAG. 8 residues coordinate Zn(2+): Cys-296, Cys-298, Cys-310, Cys-313, His-318, Cys-321, Cys-336, and Cys-339.

The protein resides in the nucleus. Potential transcription factor that may play a role in the regulation of genes involved in cell cycle G1/S transition. May bind to regulatory elements of genes, including the promoter of the transcription factor FOXO1. This is Transcription factor 19 (TCF19) from Pan troglodytes (Chimpanzee).